A 629-amino-acid chain; its full sequence is Replication protein A 70 kDa DNA-binding subunit D (629 aa).

Residues 112-135 (LDSKSGEEEAREPKKQKLEHSPVS) are disordered. Basic and acidic residues predominate over residues 115–131 (KSGEEEAREPKKQKLEH). Residues 194 to 280 (WTIKVRVTNK…QNDYEMTLNE (87 aa)) constitute a DNA-binding region (OB). Residues 492–512 (CKTCNKKVTEALDSGYWCEGC) form a C4-type zinc finger.

This sequence belongs to the replication factor A protein 1 family. As to quaternary structure, heterotrimer of RPA1, RPA2 and RPA3 (canonical replication protein A complex).

Its subcellular location is the nucleus. Its function is as follows. Component of the replication protein A complex (RPA) required for DNA recombination, repair and replication. The activity of RPA is mediated by single-stranded DNA binding and protein interactions. Probably involved in repair of double-strand DNA breaks (DSBs) induced by genotoxic stresses. The protein is Replication protein A 70 kDa DNA-binding subunit D (RPA1D) of Arabidopsis thaliana (Mouse-ear cress).